The primary structure comprises 133 residues: NADPH-dependent 7-cyano-7-deazaguanine reductase (133 aa).

Cys-49 functions as the Thioimide intermediate in the catalytic mechanism. The active-site Proton donor is the Asp-56. Residues Ile-71–Leu-73 and His-90–Glu-91 each bind substrate.

It belongs to the GTP cyclohydrolase I family. QueF type 1 subfamily.

It is found in the cytoplasm. The catalysed reaction is 7-aminomethyl-7-carbaguanine + 2 NADP(+) = 7-cyano-7-deazaguanine + 2 NADPH + 3 H(+). The protein operates within tRNA modification; tRNA-queuosine biosynthesis. Its function is as follows. Catalyzes the NADPH-dependent reduction of 7-cyano-7-deazaguanine (preQ0) to 7-aminomethyl-7-deazaguanine (preQ1). The polypeptide is NADPH-dependent 7-cyano-7-deazaguanine reductase (Leptospira interrogans serogroup Icterohaemorrhagiae serovar copenhageni (strain Fiocruz L1-130)).